A 283-amino-acid polypeptide reads, in one-letter code: Pantothenate synthetase (283 aa).

30-37 (MGNLHDGH) is a binding site for ATP. The Proton donor role is filled by H37. Q61 contacts (R)-pantoate. Beta-alanine is bound at residue Q61. An ATP-binding site is contributed by 149-152 (GEKD). Residue Q155 participates in (R)-pantoate binding. 186 to 189 (LSSR) lines the ATP pocket.

The protein belongs to the pantothenate synthetase family. As to quaternary structure, homodimer.

Its subcellular location is the cytoplasm. It carries out the reaction (R)-pantoate + beta-alanine + ATP = (R)-pantothenate + AMP + diphosphate + H(+). Its pathway is cofactor biosynthesis; (R)-pantothenate biosynthesis; (R)-pantothenate from (R)-pantoate and beta-alanine: step 1/1. Catalyzes the condensation of pantoate with beta-alanine in an ATP-dependent reaction via a pantoyl-adenylate intermediate. This Escherichia coli O157:H7 protein is Pantothenate synthetase.